A 144-amino-acid polypeptide reads, in one-letter code: Maximins 10/H3 (144 aa).

The N-terminal stretch at Met-1–Ala-18 is a signal peptide. A propeptide spanning residues Arg-19 to Arg-43 is cleaved from the precursor. At Ser-70 the chain carries Serine amide. Positions Thr-74–Arg-123 are excised as a propeptide. Residue Ile-143 is modified to Isoleucine amide.

Belongs to the bombinin family. As to expression, expressed by the skin glands.

The protein localises to the secreted. Functionally, maximin-10 shows antimicrobial activity against bacteria and against the fungus C.albicans. It has little hemolytic activity. In terms of biological role, maximin-H3 shows antibacterial activity against both Gram-positive and Gram-negative bacteria. It also shows antimicrobial activity against the fungus C.albicans. Shows strong hemolytic activity. This Bombina maxima (Giant fire-bellied toad) protein is Maximins 10/H3.